The sequence spans 384 residues: Anhydro-N-acetylmuramic acid kinase (384 aa).

ATP is bound at residue 17–24 (GTSMDGVD).

Belongs to the anhydro-N-acetylmuramic acid kinase family.

The enzyme catalyses 1,6-anhydro-N-acetyl-beta-muramate + ATP + H2O = N-acetyl-D-muramate 6-phosphate + ADP + H(+). It participates in amino-sugar metabolism; 1,6-anhydro-N-acetylmuramate degradation. It functions in the pathway cell wall biogenesis; peptidoglycan recycling. Functionally, catalyzes the specific phosphorylation of 1,6-anhydro-N-acetylmuramic acid (anhMurNAc) with the simultaneous cleavage of the 1,6-anhydro ring, generating MurNAc-6-P. Is required for the utilization of anhMurNAc either imported from the medium or derived from its own cell wall murein, and thus plays a role in cell wall recycling. This chain is Anhydro-N-acetylmuramic acid kinase, found in Burkholderia thailandensis (strain ATCC 700388 / DSM 13276 / CCUG 48851 / CIP 106301 / E264).